The following is a 177-amino-acid chain: Cytidylate kinase (177 aa).

Residue G7–T15 participates in ATP binding.

This sequence belongs to the cytidylate kinase family. Type 2 subfamily.

The protein resides in the cytoplasm. The enzyme catalyses CMP + ATP = CDP + ADP. It catalyses the reaction dCMP + ATP = dCDP + ADP. In Methanocorpusculum labreanum (strain ATCC 43576 / DSM 4855 / Z), this protein is Cytidylate kinase.